The following is a 447-amino-acid chain: Probable alpha-galactosidase B (447 aa).

An N-terminal signal peptide occupies residues 1-22 (MTTFLSLTTAAAVLTLARGSNA). 2 cysteine pairs are disulfide-bonded: Cys-45–Cys-77 and Cys-127–Cys-157. Catalysis depends on Asp-155, which acts as the Nucleophile. N-linked (GlcNAc...) asparagine glycans are attached at residues Asn-162 and Asn-180. Residue 225–229 (NWGQA) coordinates substrate. An N-linked (GlcNAc...) asparagine glycan is attached at Asn-236. The active-site Proton donor is the Asp-247. N-linked (GlcNAc...) asparagine glycosylation is present at Asn-286.

Belongs to the glycosyl hydrolase 27 family.

It localises to the secreted. It catalyses the reaction Hydrolysis of terminal, non-reducing alpha-D-galactose residues in alpha-D-galactosides, including galactose oligosaccharides, galactomannans and galactolipids.. Hydrolyzes a variety of simple alpha-D-galactoside as well as more complex molecules such as oligosaccharides and polysaccharides. The protein is Probable alpha-galactosidase B (aglB) of Neosartorya fischeri (strain ATCC 1020 / DSM 3700 / CBS 544.65 / FGSC A1164 / JCM 1740 / NRRL 181 / WB 181) (Aspergillus fischerianus).